The chain runs to 262 residues: Acyl-[acyl-carrier-protein]--UDP-N-acetylglucosamine O-acyltransferase (262 aa).

The protein belongs to the transferase hexapeptide repeat family. LpxA subfamily. Homotrimer.

It is found in the cytoplasm. The catalysed reaction is a (3R)-hydroxyacyl-[ACP] + UDP-N-acetyl-alpha-D-glucosamine = a UDP-3-O-[(3R)-3-hydroxyacyl]-N-acetyl-alpha-D-glucosamine + holo-[ACP]. Its pathway is glycolipid biosynthesis; lipid IV(A) biosynthesis; lipid IV(A) from (3R)-3-hydroxytetradecanoyl-[acyl-carrier-protein] and UDP-N-acetyl-alpha-D-glucosamine: step 1/6. Involved in the biosynthesis of lipid A, a phosphorylated glycolipid that anchors the lipopolysaccharide to the outer membrane of the cell. This is Acyl-[acyl-carrier-protein]--UDP-N-acetylglucosamine O-acyltransferase from Campylobacter curvus (strain 525.92).